Reading from the N-terminus, the 491-residue chain is Carboxypeptidase SOL1 (491 aa).

A signal peptide spans 1–25; it reads MSKLRFFQSLLISTVICFFLPSINA. The Extracellular segment spans residues 26–452; the sequence is RGGHSDHIHP…LLTQFFTETN (427 aa). N-linked (GlcNAc...) asparagine glycosylation is present at N39. A Peptidase M14 domain is found at 64–338; it reads GYMTNDDLEK…KSMLNLVASL (275 aa). Residues H125 and E128 each coordinate Zn(2+). Substrate is bound by residues 125–128 and 186–187; these read HGDE and NR. H226 contacts Zn(2+). N268 is a glycosylation site (N-linked (GlcNAc...) asparagine). A substrate-binding site is contributed by Y286. E308 (proton donor/acceptor) is an active-site residue. A helical transmembrane segment spans residues 453–470; that stretch reads NGITLTLFVVVVFLCFLL. Residues 471-491 lie on the Cytoplasmic side of the membrane; sequence QRRVRFNLWKQRQSSRRSITV.

This sequence belongs to the peptidase M14 family. It depends on Zn(2+) as a cofactor. As to expression, expressed in roots, shoots, leaves, flowers and siliques.

It is found in the endosome membrane. In terms of biological role, possesses in vitro carboxypeptidase activity against the C-terminal arginine and lysine residues. Involved in the maturation of CLE19. Removes the C-terminal arginine residue of CLE19 proprotein. The cleavage of the C-terminal arginine residue is necessary for CLE19 activity in vivo. Is not involved in generating active CLV3. Is not involved in CLE19 or CLV3 perception. The chain is Carboxypeptidase SOL1 from Arabidopsis thaliana (Mouse-ear cress).